Here is a 359-residue protein sequence, read N- to C-terminus: Probable dual-specificity RNA methyltransferase RlmN (359 aa).

The Proton acceptor role is filled by E100. Positions 106–340 constitute a Radical SAM core domain; sequence TDKRLTVCVS…VSVRASRGRD (235 aa). A disulfide bridge connects residues C113 and C345. [4Fe-4S] cluster-binding residues include C120, C124, and C127. S-adenosyl-L-methionine is bound by residues 167–168, S197, 226–228, and N302; these read GE and SLH. C345 (S-methylcysteine intermediate) is an active-site residue.

This sequence belongs to the radical SAM superfamily. RlmN family. It depends on [4Fe-4S] cluster as a cofactor.

It localises to the cytoplasm. The catalysed reaction is adenosine(2503) in 23S rRNA + 2 reduced [2Fe-2S]-[ferredoxin] + 2 S-adenosyl-L-methionine = 2-methyladenosine(2503) in 23S rRNA + 5'-deoxyadenosine + L-methionine + 2 oxidized [2Fe-2S]-[ferredoxin] + S-adenosyl-L-homocysteine. It catalyses the reaction adenosine(37) in tRNA + 2 reduced [2Fe-2S]-[ferredoxin] + 2 S-adenosyl-L-methionine = 2-methyladenosine(37) in tRNA + 5'-deoxyadenosine + L-methionine + 2 oxidized [2Fe-2S]-[ferredoxin] + S-adenosyl-L-homocysteine. Its function is as follows. Specifically methylates position 2 of adenine 2503 in 23S rRNA and position 2 of adenine 37 in tRNAs. The protein is Probable dual-specificity RNA methyltransferase RlmN of Prochlorococcus marinus (strain NATL1A).